The primary structure comprises 163 residues: Probable ribosome biogenesis protein RLP24 (163 aa).

Belongs to the eukaryotic ribosomal protein eL24 family. Associated with nucleolar and cytoplasmic pre-60S particles. At the end of biogenesis it dissociates from cytoplasmic pre-60S particles and is likely to be exchanged for its ribosomal homolog, RPL24.

The protein resides in the nucleus. Its subcellular location is the nucleolus. Its function is as follows. Involved in the biogenesis of the 60S ribosomal subunit. Ensures the docking of GTPBP4/NOG1 to pre-60S particles. The sequence is that of Probable ribosome biogenesis protein RLP24 (Rsl24d1) from Rattus norvegicus (Rat).